A 253-amino-acid chain; its full sequence is Sugar fermentation stimulation protein homolog (253 aa).

Belongs to the SfsA family.

This chain is Sugar fermentation stimulation protein homolog, found in Prochlorococcus marinus (strain NATL1A).